We begin with the raw amino-acid sequence, 59 residues long: U-actitoxin-Aer2a (59 aa).

In terms of processing, contains 5 disulfide bonds.

The protein localises to the secreted. It is found in the nematocyst. The protein is U-actitoxin-Aer2a of Anemonia erythraea (Sea anemone).